The chain runs to 445 residues: Phosphatidate cytidylyltransferase 2 (445 aa).

The segment covering 1–39 (MTELRQRVAHEPVAPPEDKESESEAKVDGETASDSESRA) has biased composition (basic and acidic residues). The disordered stretch occupies residues 1–49 (MTELRQRVAHEPVAPPEDKESESEAKVDGETASDSESRAESAPLPVSAD). Ser-21 carries the post-translational modification Phosphoserine. At Thr-31 the chain carries Phosphothreonine. Phosphoserine is present on residues Ser-33, Ser-35, and Ser-37. At Thr-51 the chain carries Phosphothreonine. 6 helical membrane passes run 79-99 (MIAF…IIVM), 132-152 (FLLC…FFTL), 166-186 (HRFI…LSLV), 213-233 (LVIH…SCVI), 262-282 (GFIG…YVMS), and 340-360 (IALS…ASGF).

The protein belongs to the CDS family. In terms of assembly, homodimer. Widely expressed. Expressed in heart, brain and retina, and to a lesser extent in placenta, lung, liver, skeletal muscle, kidney and pancreas.

The protein localises to the endoplasmic reticulum membrane. The catalysed reaction is a 1,2-diacyl-sn-glycero-3-phosphate + CTP + H(+) = a CDP-1,2-diacyl-sn-glycerol + diphosphate. It carries out the reaction 1-octadecanoyl-2-(5Z,8Z,11Z,14Z-eicosatetraenoyl)-sn-glycero-3-phosphate + CTP + H(+) = 1-octadecanoyl-2-(5Z,8Z,11Z,14Z-eicosatetraenoyl)-sn-glycero-3-cytidine-5'-diphosphate + diphosphate. The enzyme catalyses 1-octadecanoyl-2-(9Z,12Z-octadecadienoyl)-sn-glycero-3-phosphate + CTP + H(+) = 1-octadecanoyl-2-(9Z,12Z-octadecadienoyl)-sn-glycero-3-cytidine-5'-diphosphate + diphosphate. It catalyses the reaction 1-hexadecanoyl-2-(5Z,8Z,11Z,14Z-eicosatetraenoyl)-sn-glycero-3-phosphate + CTP + H(+) = 1-hexadecanoyl-2-(5Z,8Z,11Z,14Z-eicosatetraenoyl)-sn-glycero-3-cytidine-5'-diphosphate + diphosphate. The catalysed reaction is 1,2-di-(5Z,8Z,11Z,14Z)-eicosatetraenoyl-sn-glycero-3-phosphate + CTP + H(+) = 1,2-di-(5Z,8Z,11Z,14Z-eicosatetraenoyl)-sn-glycero-3-cytidine-5'-diphosphate + diphosphate. It carries out the reaction 1-octadecanoyl-2-(9Z-octadecenoyl)-sn-glycero-3-phosphate + CTP + H(+) = 1-octadecanoyl-2-(9Z-octadecenoyl)-sn-glycero-3-cytidine-5'-diphosphate + diphosphate. The enzyme catalyses 1-octadecanoyl-2-(4Z,7Z,10Z,13Z,16Z,19Z-docosahexaenoyl)-sn-glycero-3-phosphate + CTP + H(+) = 1-octadecanoyl-2-(4Z,7Z,10Z,13Z,16Z,19Z-docosahexaenoyl)-sn-glycero-3-cytidine-5'-diphosphate + diphosphate. It catalyses the reaction 1,2-di-(9Z,12Z-octadecadienoyl)-sn-glycero-3-phosphate + CTP + H(+) = 1,2-di-(9Z,12Z-octadecadienoyl)-sn-glycero-3-cytidine-5'-diphosphate + diphosphate. The catalysed reaction is 1,2-di-(9Z-octadecenoyl)-sn-glycero-3-phosphate + CTP + H(+) = 1,2-di-(9Z-octadecenoyl)-sn-glycero-3-cytidine-5'-diphosphate + diphosphate. It functions in the pathway phospholipid metabolism; CDP-diacylglycerol biosynthesis; CDP-diacylglycerol from sn-glycerol 3-phosphate: step 3/3. Inhibited by its anionic phospholipid end products, with phosphatidylinositol-(4,5)- bisphosphate (PIP2) showing the strongest inhibition. Inhibition is also acyl chain specific, with 1-stearoyl-2-arachidonoyl-snphosphatidylinositol showing the strongest inhibition. Catalyzes the conversion of phosphatidic acid (PA) to CDP-diacylglycerol (CDP-DAG), an essential intermediate in the synthesis of phosphatidylglycerol, cardiolipin and phosphatidylinositol. Exhibits specificity for the nature of the acyl chains at the sn-1 and sn-2 positions in the substrate, PA and the preferred acyl chain composition is 1-stearoyl-2-arachidonoyl-sn-phosphatidic acid. Plays an important role in regulating the growth and maturation of lipid droplets which are storage organelles at the center of lipid and energy homeostasis. The protein is Phosphatidate cytidylyltransferase 2 of Homo sapiens (Human).